The following is a 576-amino-acid chain: Protein alan shepard (576 aa).

Pro residues predominate over residues 1-12; sequence MHPRYSPAPPPQ. A disordered region spans residues 1 to 66; the sequence is MHPRYSPAPP…GSSSSAAAAP (66 aa). Tyr5 bears the Phosphotyrosine mark. Over residues 13–24 the composition is skewed to low complexity; the sequence is QQQQMGGPPHQQ. Positions 25–35 are enriched in gly residues; that stretch reads QGGGGGGGGNM. The span at 37–54 shows a compositional bias: polar residues; sequence GPSNAQQLPPQIPRSQNY. Residues 55 to 66 are compositionally biased toward low complexity; sequence SNGSSSSAAAAP. A phosphotyrosine mark is found at Tyr125 and Tyr142. The disordered stretch occupies residues 164–225; it reads PATTTYGQRV…TVQNQNQQGG (62 aa). Residues 178-225 are compositionally biased toward low complexity; the sequence is SPSNTNSSSSSNTGSQSGTLSTSLSNTTNTNTNMGPNGTVQNQNQQGG. RRM domains follow at residues 231–302 and 308–387; these read TNLY…MAKQ and TNLY…FADG. The tract at residues 538-576 is disordered; that stretch reads YAPPPTIIPTMPMTDSEQASTAASPDEAYTQYPHQAAPK.

Functionally, has a role in the perception of gravity. This is Protein alan shepard from Drosophila simulans (Fruit fly).